The primary structure comprises 90 residues: Acylphosphatase (90 aa).

The Acylphosphatase-like domain maps to 3–90; the sequence is QKLFIVTGHV…EQFEHFEIRR (88 aa). Residues Arg-18 and Asn-36 contribute to the active site.

Belongs to the acylphosphatase family.

It carries out the reaction an acyl phosphate + H2O = a carboxylate + phosphate + H(+). This is Acylphosphatase (acyP) from Actinobacillus pleuropneumoniae serotype 5b (strain L20).